The chain runs to 536 residues: Prickle planar cell polarity protein 3-B (536 aa).

Residues 66–175 enclose the PET domain; that stretch reads SGSQRDSLCD…CVRPISGTMS (110 aa). LIM zinc-binding domains are found at residues 177–241, 242–302, and 305–366; these read TVCQ…ELKR, PRCL…LYAQ, and DSCG…HTKS. The interval 418–536 is disordered; that stretch reads PTQAAPARSL…KKKDKSCFLS (119 aa). The segment covering 438–448 has biased composition (basic and acidic residues); sequence FSRECPNRRSL. The span at 450–467 shows a compositional bias: polar residues; that stretch reads DLSSHTRTPTRVTFQLPS. A compositionally biased stretch (low complexity) spans 474-487; that stretch reads SISFSRPSFTSSSS.

It belongs to the prickle / espinas / testin family. In terms of assembly, interacts with vangl2 via its C-terminus. The vangl2-dependent membrane recruitment of prickle3 is a prerequisite for its polarization. Interacts with wtip. Wtip is involved in the recruitment of prickle3 to the basal body.

The protein resides in the cytoplasm. It localises to the cell membrane. Its subcellular location is the mitochondrion. Its function is as follows. Involved in the planar cell polarity (PCP) pathway that is essential for the polarization of epithelial cells during morphogenetic processes, including gastrulation and neurulation. PCP is maintained by two molecular modules, the global and the core modules. Proteins of the core module include the proteins Frizzled (Fz), Disheveled (Dsh), Van Gogh (Vang), Prickle (Pk), Flamingo (Fmi, Celsr) and Diego (Dgo). The core module proteins develop subcellular asymmetry, accumulating in two groups on opposite sides of epithelial cells. Distinct proximal (Vang, Pk and Fmi) and distal (Fz, Dsh, Dgo and Fmi) complexes segregate to opposite sides of the cell, where they interact with the opposite complex in the neighboring cell at or near the adherents junctions. Directional information to orient polarization with respect to the tissue axes is provided by the global module which involves Wnt proteins. Involved in the organization of the basal body. Involved in cilia growth and positioning. Required for proper assembly, stability, and function of mitochondrial membrane ATP synthase (mitochondrial complex V). The polypeptide is Prickle planar cell polarity protein 3-B (prickle3-b) (Xenopus laevis (African clawed frog)).